Reading from the N-terminus, the 414-residue chain is Probable aminotransferase TAT2 (414 aa).

This sequence belongs to the class-I pyridoxal-phosphate-dependent aminotransferase family. Requires pyridoxal 5'-phosphate as cofactor.

This is Probable aminotransferase TAT2 from Arabidopsis thaliana (Mouse-ear cress).